We begin with the raw amino-acid sequence, 435 residues long: MKKTHITEQKFADLGLNPQVVEGLEKKGFEFCTPIQALALPVLLSGQDIAGQAQTGTGKTLAFLTATFNHLLTTPAHEGRQPTQPRAIIMAPTRELAIQIYNDAEPLIASTGIKAALAYGGESYDKQLTKLQGGVDVLIGTTGRIIDFYKQRVFNLNNIQAVVLDEADRMFDLGFIKDIRFLFRRMPAPQERLNMLFSATLSYRVQELAFEHMHNPEHVVVEPEQKTGHRIQEELFYPSNEDKMALLQTLIEEEWPDRAIIFANTKYKCESIWAHLAADGHRVGLLTGDVPQKKREKILEQFTQGSVDLLVATDVAARGLHIPQVTHVFNYDLPDDCEDYVHRIGRTGRAGASGHSISFACEDYAINLPAIEEYIEHTIPVSDYDSSALIQDLPAPVRTPSARNQQRRTNTGGARSGDRKSNNRRPRQPRQHKEA.

The Q motif signature appears at 9–37 (QKFADLGLNPQVVEGLEKKGFEFCTPIQA). Positions 40 to 219 (LPVLLSGQDI…FEHMHNPEHV (180 aa)) constitute a Helicase ATP-binding domain. Residue 53-60 (AQTGTGKT) participates in ATP binding. Positions 165 to 168 (DEAD) match the DEAD box motif. The Helicase C-terminal domain maps to 245–390 (ALLQTLIEEE…VSDYDSSALI (146 aa)). The segment at 395 to 435 (APVRTPSARNQQRRTNTGGARSGDRKSNNRRPRQPRQHKEA) is disordered. Positions 401–413 (SARNQQRRTNTGG) are enriched in polar residues. Residues 422-435 (NNRRPRQPRQHKEA) show a composition bias toward basic residues.

The protein belongs to the DEAD box helicase family. RhlB subfamily. Component of the RNA degradosome, which is a multiprotein complex involved in RNA processing and mRNA degradation.

The protein localises to the cytoplasm. It carries out the reaction ATP + H2O = ADP + phosphate + H(+). Functionally, DEAD-box RNA helicase involved in RNA degradation. Has RNA-dependent ATPase activity and unwinds double-stranded RNA. This Vibrio vulnificus (strain CMCP6) protein is ATP-dependent RNA helicase RhlB.